Reading from the N-terminus, the 130-residue chain is Large ribosomal subunit protein bL17 (130 aa).

This sequence belongs to the bacterial ribosomal protein bL17 family. In terms of assembly, part of the 50S ribosomal subunit. Contacts protein L32.

The protein is Large ribosomal subunit protein bL17 of Shewanella pealeana (strain ATCC 700345 / ANG-SQ1).